A 374-amino-acid polypeptide reads, in one-letter code: Putative F-box protein At3g17480 (374 aa).

An F-box domain is found at 6–52; that stretch reads SSPMSVLTEDLVEDILSRVPATSLVRLRSTCKQWNAILNDRRFIKKH.

The chain is Putative F-box protein At3g17480 from Arabidopsis thaliana (Mouse-ear cress).